The sequence spans 1183 residues: Protein deacetylase HDAC6 (1183 aa).

A disordered region spans residues 1–61 (MTSTGQDSST…KGKMKKLSQP (61 aa)). A compositionally biased stretch (polar residues) spans 18 to 29 (NPQSPLQDSSAT). Ser-21 bears the Phosphoserine mark. Arg-32 carries the omega-N-methylarginine modification. Positions 66–75 (LIVGLQGLDL) match the Nuclear export signal motif. 2 histone deacetylase regions span residues 86–434 (GLVF…TLLG) and 512–830 (GLVY…SLLG). The 1 role is filled by His-215. The active-site 2 is the His-641. The interval 972–1042 (ATENSANQTT…EAQEVQESEE (71 aa)) is disordered. Positions 980–996 (TTSGEEASGETESFGTS) are enriched in low complexity. Thr-990, Thr-995, and Thr-1005 each carry phosphothreonine. Polar residues predominate over residues 997 to 1008 (PSSNASKQTTGA). At Ser-1009 the chain carries Phosphoserine. A compositionally biased stretch (low complexity) spans 1021–1035 (ELGLSSTLELSSEAQ). The segment at 1079 to 1177 (SWCPHLMAVC…NAAHQNKFGE (99 aa)) adopts a UBP-type zinc-finger fold. Zn(2+)-binding residues include Cys-1081, His-1083, Cys-1101, Cys-1104, Cys-1113, Cys-1116, and Cys-1121. Positions 1122 to 1124 (SRY) are ubiquitin binding. Zn(2+)-binding residues include His-1128, His-1132, His-1138, Cys-1151, and Cys-1154. The interval 1150 to 1157 (WCYLCQAY) is ubiquitin binding.

The protein belongs to the histone deacetylase family. HD type 2 subfamily. As to quaternary structure, forms a trimeric complex in the nucleus consisting of BANP, HDAC6 and KHDRBS1/SAM68; HDAC6 keeps KHDRBS1 in a deacetylated state which inhibits the inclusion of CD44 alternate exons. The complex is disrupted by MAPK1/MAPK3-mediated phosphorylation of BANP which results in BANP export to the cytoplasm. This facilitates acetylation of KHDRBS1 and CD44 variant exon inclusion. Interacts with SIRT2 (via both phosphorylated, unphosphorylated, active or inactive forms); the interaction is necessary for the complex to interact with alpha-tubulin. Under proteasome impairment conditions, interacts with UBD via its histone deacetylase 1 and UBP-type zinc-finger regions. Interacts with BBIP1, CBFA2T3, CYLD, DDIT3/CHOP, ZMYND15, F-actin and HDAC11. Interacts with RIPOR2; this interaction occurs during early myogenic differentiation and prevents HDAC6 to deacetylate tubulin. Interacts with AURKA; AURKA-mediated phosphorylation of HDAC6 promotes deacetylation of alpha-tubulin. Interacts with DYSF; this interaction occurs during early myogenic differentiation. Interacts with TPPP; inhibiting the tubulin deacetylase activity of HDAC6. Interacts with DYNLL1. Interacts with ATP13A2; the interaction results in recruitment of HDAC6 to lysosomes to promote CTTN deacetylation. Interacts with CCDC141 (via the N-terminal region); inhibiting the deacetylase activity of HDAC6. Interacts with IPO7; the interaction facilitates HDAC6 nuclear translocation in dental papilla cells. It depends on Zn(2+) as a cofactor. Phosphorylated by AURKA; phosphorylation increases HDAC6-mediated deacetylation of alpha-tubulin and subsequent disassembly of cilia. In terms of processing, ubiquitinated. Its polyubiquitination however does not lead to its degradation. Post-translationally, sumoylated in vitro.

The protein localises to the cytoplasm. It is found in the cytoskeleton. The protein resides in the nucleus. Its subcellular location is the perikaryon. It localises to the cell projection. The protein localises to the dendrite. It is found in the axon. The protein resides in the cilium. Its subcellular location is the microtubule organizing center. It localises to the centrosome. The protein localises to the cilium basal body. It catalyses the reaction N(6)-acetyl-L-lysyl-[protein] + H2O = L-lysyl-[protein] + acetate. The catalysed reaction is N(6)-acetyl-L-lysyl-[alpha-tubulin] + H2O = L-lysyl-[alpha-tubulin] + acetate. It participates in protein modification; protein ubiquitination. Its function is as follows. Deacetylates a wide range of non-histone substrates. Plays a central role in microtubule-dependent cell motility by mediating deacetylation of tubulin. Required for cilia disassembly via deacetylation of alpha-tubulin. Alpha-tubulin deacetylation results in destabilization of dynamic microtubules. Promotes deacetylation of CTTN, leading to actin polymerization, promotion of autophagosome-lysosome fusion and completion of autophagy. Deacetylates SQSTM1. Deacetylates peroxiredoxins PRDX1 and PRDX2, decreasing their reducing activity. Deacetylates antiviral protein RIGI in the presence of viral mRNAs which is required for viral RNA detection by RIGI. Sequentially deacetylates and polyubiquitinates DNA mismatch repair protein MSH2 which leads to MSH2 degradation, reducing cellular sensitivity to DNA-damaging agents and decreasing cellular DNA mismatch repair activities. Deacetylates DNA mismatch repair protein MLH1 which prevents recruitment of the MutL alpha complex (formed by the MLH1-PMS2 heterodimer) to the MutS alpha complex (formed by the MSH2-MSH6 heterodimer), leading to tolerance of DNA damage. Deacetylates RHOT1/MIRO1 which blocks mitochondrial transport and mediates axon growth inhibition. Deacetylates transcription factor SP1 which leads to increased expression of ENG, positively regulating angiogenesis. Deacetylates KHDRBS1/SAM68 which regulates alternative splicing by inhibiting the inclusion of CD44 alternate exons. Promotes odontoblast differentiation following IPO7-mediated nuclear import and subsequent repression of RUNX2 expression. In addition to its protein deacetylase activity, plays a key role in the degradation of misfolded proteins: when misfolded proteins are too abundant to be degraded by the chaperone refolding system and the ubiquitin-proteasome, mediates the transport of misfolded proteins to a cytoplasmic juxtanuclear structure called aggresome. Probably acts as an adapter that recognizes polyubiquitinated misfolded proteins and targets them to the aggresome, facilitating their clearance by autophagy. The sequence is that of Protein deacetylase HDAC6 from Rattus norvegicus (Rat).